Consider the following 436-residue polypeptide: MIDPQLLRKDIAAVQARLATRKFQLDVEKFNTLESERKSLQTRTEELQAKRNQLAKAIGMKKGKGEDAAAEMAEASQINVDMESGAARLSVLQAEIADFLMGIPNLPDESVPAGKDETENKEVKVWGEQPMFDFEIKDHVDLGGPLGLDFEVAAKISGSRFVVLKGPIARLHRALAQFMIDTHATHHGYQEVYAPYMVNAASMRGTGQLPKFEEDLFKVPRQMGGEDEGGEAKTENFYLIPTAEVPVTNLVRDEIVNADTLPLKFVAHTPCFRSEAGSYGRDVRGMIRQHQFDKVELVQITKPEHSMQALEELTGHAERILELLELPYRKVLLCTGDMGFGSTKTYDLEVWVPSQNAYREISSCSSMGDFQARRMQARFKAGQGKPELLHTLNGSGLAVGRALVALIENKQLVDGSIAIPKALQPYLGGLETLKPN.

Position 242 to 244 (242 to 244) interacts with L-serine; it reads TAE. An ATP-binding site is contributed by 273-275; it reads RSE. Glutamate 296 serves as a coordination point for L-serine. Position 360–363 (360–363) interacts with ATP; the sequence is EISS. Position 395 (serine 395) interacts with L-serine.

The protein belongs to the class-II aminoacyl-tRNA synthetase family. Type-1 seryl-tRNA synthetase subfamily. As to quaternary structure, homodimer. The tRNA molecule binds across the dimer.

The protein localises to the cytoplasm. The catalysed reaction is tRNA(Ser) + L-serine + ATP = L-seryl-tRNA(Ser) + AMP + diphosphate + H(+). It catalyses the reaction tRNA(Sec) + L-serine + ATP = L-seryl-tRNA(Sec) + AMP + diphosphate + H(+). It functions in the pathway aminoacyl-tRNA biosynthesis; selenocysteinyl-tRNA(Sec) biosynthesis; L-seryl-tRNA(Sec) from L-serine and tRNA(Sec): step 1/1. Its function is as follows. Catalyzes the attachment of serine to tRNA(Ser). Is also able to aminoacylate tRNA(Sec) with serine, to form the misacylated tRNA L-seryl-tRNA(Sec), which will be further converted into selenocysteinyl-tRNA(Sec). The chain is Serine--tRNA ligase from Polynucleobacter asymbioticus (strain DSM 18221 / CIP 109841 / QLW-P1DMWA-1) (Polynucleobacter necessarius subsp. asymbioticus).